We begin with the raw amino-acid sequence, 158 residues long: Transcription elongation factor GreA (158 aa).

Belongs to the GreA/GreB family.

In terms of biological role, necessary for efficient RNA polymerase transcription elongation past template-encoded arresting sites. The arresting sites in DNA have the property of trapping a certain fraction of elongating RNA polymerases that pass through, resulting in locked ternary complexes. Cleavage of the nascent transcript by cleavage factors such as GreA or GreB allows the resumption of elongation from the new 3'terminus. GreA releases sequences of 2 to 3 nucleotides. The sequence is that of Transcription elongation factor GreA from Methylobacterium sp. (strain 4-46).